The following is a 385-amino-acid chain: Tryptophan--tRNA ligase (385 aa).

A 'HIGH' region motif is present at residues 89 to 98 (PSSKTMHIGH). The 'KMSKS' region motif lies at 268 to 272 (KMSAS).

It belongs to the class-I aminoacyl-tRNA synthetase family. Homodimer.

It carries out the reaction tRNA(Trp) + L-tryptophan + ATP = L-tryptophyl-tRNA(Trp) + AMP + diphosphate + H(+). This chain is Tryptophan--tRNA ligase, found in Encephalitozoon cuniculi (strain GB-M1) (Microsporidian parasite).